We begin with the raw amino-acid sequence, 233 residues long: Probable fimbrial chaperone protein ElfD (233 aa).

Residues 1–26 (MKTCITKGIVTVSLTAILLSCSSAWA) form the signal peptide.

It belongs to the periplasmic pilus chaperone family.

It localises to the periplasm. Functionally, part of the elfADCG-ycbUVF fimbrial operon, which promotes adhesion of bacteria to different abiotic surfaces. Could be required for the biogenesis of the ElfA fimbriae. The chain is Probable fimbrial chaperone protein ElfD (elfD) from Escherichia coli (strain K12).